A 360-amino-acid chain; its full sequence is Malate dehydrogenase (360 aa).

It belongs to the LDH2/MDH2 oxidoreductase family. As to quaternary structure, homodimer.

Its subcellular location is the cytoplasm. The enzyme catalyses (S)-malate + NAD(+) = oxaloacetate + NADH + H(+). This chain is Malate dehydrogenase (mdh), found in Pyrococcus horikoshii (strain ATCC 700860 / DSM 12428 / JCM 9974 / NBRC 100139 / OT-3).